The sequence spans 166 residues: Large ribosomal subunit protein uL10 (166 aa).

It belongs to the universal ribosomal protein uL10 family. In terms of assembly, part of the ribosomal stalk of the 50S ribosomal subunit. The N-terminus interacts with L11 and the large rRNA to form the base of the stalk. The C-terminus forms an elongated spine to which L12 dimers bind in a sequential fashion forming a multimeric L10(L12)X complex.

Functionally, forms part of the ribosomal stalk, playing a central role in the interaction of the ribosome with GTP-bound translation factors. This chain is Large ribosomal subunit protein uL10, found in Shewanella sediminis (strain HAW-EB3).